Consider the following 218-residue polypeptide: Cytidylate kinase (218 aa).

11–19 (GPGASGKGT) provides a ligand contact to ATP.

This sequence belongs to the cytidylate kinase family. Type 1 subfamily.

Its subcellular location is the cytoplasm. The enzyme catalyses CMP + ATP = CDP + ADP. It catalyses the reaction dCMP + ATP = dCDP + ADP. The chain is Cytidylate kinase from Neisseria gonorrhoeae (strain ATCC 700825 / FA 1090).